The primary structure comprises 256 residues: (E)-benzylidenesuccinyl-CoA hydratase (256 aa).

E110 serves as the catalytic Nucleophile. The Proton acceptor role is filled by E130.

The protein belongs to the enoyl-CoA hydratase/isomerase family. In terms of assembly, homotrimer.

It catalyses the reaction (2S)-[(R)-hydroxy(phenyl)methyl]succinyl-CoA = (E)-2-benzylidenesuccinyl-CoA + H2O. It functions in the pathway xenobiotic degradation; toluene degradation. In terms of biological role, involved in an anaerobic toluene degradation pathway. Catalyzes the hydration of (E)-2-benzylidenesuccinyl-CoA to the corresponding alcohol intermediate, 2-(alpha-hydroxybenzyl)succinyl-CoA. Also accepts the N-acetylcysteamine (NAC) thioester of (E)-benzylidenesuccinate. This is (E)-benzylidenesuccinyl-CoA hydratase from Thauera aromatica.